The chain runs to 140 residues: Putative membrane protein ORF7 (140 aa).

A helical transmembrane segment spans residues 44-60 (TCAVSFFALFMLIIWVL). The tract at residues 66-118 (PEGSTTRGTDAHTQTEGSTTRGTDAHTQTEGSRDQGSMTPEADDLTRPPLGHG) is disordered. Positions 68-103 (GSTTRGTDAHTQTEGSTTRGTDAHTQTEGSRDQGSM) are enriched in polar residues.

It localises to the membrane. In Ictalurid herpesvirus 1 (strain Auburn) (IcHV-1), this protein is Putative membrane protein ORF7 (ORF7).